The sequence spans 616 residues: Chaperone protein HscA (616 aa).

The protein belongs to the heat shock protein 70 family.

Its function is as follows. Chaperone involved in the maturation of iron-sulfur cluster-containing proteins. Has a low intrinsic ATPase activity which is markedly stimulated by HscB. Involved in the maturation of IscU. The protein is Chaperone protein HscA of Enterobacter sp. (strain 638).